A 149-amino-acid polypeptide reads, in one-letter code: SsrA-binding protein (149 aa).

The disordered stretch occupies residues 123–149 (KQFDKRETEKQRDWQREKARIMKGGKE).

It belongs to the SmpB family.

It localises to the cytoplasm. Its function is as follows. Required for rescue of stalled ribosomes mediated by trans-translation. Binds to transfer-messenger RNA (tmRNA), required for stable association of tmRNA with ribosomes. tmRNA and SmpB together mimic tRNA shape, replacing the anticodon stem-loop with SmpB. tmRNA is encoded by the ssrA gene; the 2 termini fold to resemble tRNA(Ala) and it encodes a 'tag peptide', a short internal open reading frame. During trans-translation Ala-aminoacylated tmRNA acts like a tRNA, entering the A-site of stalled ribosomes, displacing the stalled mRNA. The ribosome then switches to translate the ORF on the tmRNA; the nascent peptide is terminated with the 'tag peptide' encoded by the tmRNA and targeted for degradation. The ribosome is freed to recommence translation, which seems to be the essential function of trans-translation. This chain is SsrA-binding protein, found in Cupriavidus taiwanensis (strain DSM 17343 / BCRC 17206 / CCUG 44338 / CIP 107171 / LMG 19424 / R1) (Ralstonia taiwanensis (strain LMG 19424)).